A 107-amino-acid chain; its full sequence is MMKVLVVVALLVTLISYSSSEGIDDLEADELLSLMANEQTRKECIPKHHECTSNKHGCCRGNFFKYKCQCTTVVTQDGEQTERCFCGTPPHHKAAELVVGFRKKIFG.

The signal sequence occupies residues 1 to 20 (MMKVLVVVALLVTLISYSSS). A propeptide spanning residues 21-41 (EGIDDLEADELLSLMANEQTR) is cleaved from the precursor. Cystine bridges form between Cys44-Cys59, Cys51-Cys68, Cys58-Cys86, and Cys70-Cys84.

This sequence belongs to the neurotoxin 19 (CSTX) family. 04 (U1-Lctx) subfamily. As to expression, expressed by the venom gland.

The protein resides in the secreted. The polypeptide is U1-lycotoxin-Ls1l (Lycosa singoriensis (Wolf spider)).